We begin with the raw amino-acid sequence, 293 residues long: Protoheme IX farnesyltransferase (293 aa).

9 consecutive transmembrane segments (helical) span residues 9–29 (LIKP…FLLA), 38–58 (YIIL…SCVL), 86–106 (FVKN…LFLG), 111–131 (LLTI…YSLW), 137–157 (IYST…GYCT), 167–187 (WLLF…ITIF), 211–231 (IHMI…TVLG), 234–254 (SYTF…TGWY), and 271–291 (ILSI…SIFI).

This sequence belongs to the UbiA prenyltransferase family. Protoheme IX farnesyltransferase subfamily.

The protein resides in the cell inner membrane. It catalyses the reaction heme b + (2E,6E)-farnesyl diphosphate + H2O = Fe(II)-heme o + diphosphate. Its pathway is porphyrin-containing compound metabolism; heme O biosynthesis; heme O from protoheme: step 1/1. Converts heme B (protoheme IX) to heme O by substitution of the vinyl group on carbon 2 of heme B porphyrin ring with a hydroxyethyl farnesyl side group. The protein is Protoheme IX farnesyltransferase of Blochmanniella floridana.